The sequence spans 193 residues: MYNVFDEYSQKAKNEGYLARSVYKLIEIDKKFSLFSSGNILDIGASPGSFSQYAYANLKNGVLVAVDLNDVNLNFTSNFYFIKGNIYLDEVYQKIKIFSPYSLIVSDAAPSTTGNRLVDTSNSFNLNIRIFELACESLMRGGNLLIKVFQGGEEEQIFYKLKSCFRVVKKVRPKAVRKNSFEIYFLAKDFAKL.

S-adenosyl-L-methionine contacts are provided by Gly48, Phe50, Asp67, Asn85, and Asp107. Catalysis depends on Lys147, which acts as the Proton acceptor.

The protein belongs to the class I-like SAM-binding methyltransferase superfamily. RNA methyltransferase RlmE family.

The protein localises to the cytoplasm. It carries out the reaction uridine(2552) in 23S rRNA + S-adenosyl-L-methionine = 2'-O-methyluridine(2552) in 23S rRNA + S-adenosyl-L-homocysteine + H(+). In terms of biological role, specifically methylates the uridine in position 2552 of 23S rRNA at the 2'-O position of the ribose in the fully assembled 50S ribosomal subunit. This is Ribosomal RNA large subunit methyltransferase E from Borrelia duttonii (strain Ly).